The chain runs to 320 residues: ATP-dependent 6-phosphofructokinase (320 aa).

Gly11 contributes to the ATP binding site. 21-25 (RAVTK) is an ADP binding site. Residues 72–73 (RF) and 102–105 (GDGS) contribute to the ATP site. Asp103 is a Mg(2+) binding site. 125-127 (TID) serves as a coordination point for substrate. Asp127 serves as the catalytic Proton acceptor. Arg154 provides a ligand contact to ADP. Substrate is bound by residues Arg162 and 169-171 (MGR). Residues 185–187 (GAD) and 213–215 (KDH) contribute to the ADP site. Substrate is bound by residues Glu222, Arg243, and 249–252 (HMQR).

It belongs to the phosphofructokinase type A (PFKA) family. ATP-dependent PFK group I subfamily. Prokaryotic clade 'B1' sub-subfamily. Homotetramer. Requires Mg(2+) as cofactor.

The protein resides in the cytoplasm. It carries out the reaction beta-D-fructose 6-phosphate + ATP = beta-D-fructose 1,6-bisphosphate + ADP + H(+). It functions in the pathway carbohydrate degradation; glycolysis; D-glyceraldehyde 3-phosphate and glycerone phosphate from D-glucose: step 3/4. Its activity is regulated as follows. Allosterically activated by ADP and other diphosphonucleosides, and allosterically inhibited by phosphoenolpyruvate. Functionally, catalyzes the phosphorylation of D-fructose 6-phosphate to fructose 1,6-bisphosphate by ATP, the first committing step of glycolysis. In Lactobacillus helveticus (strain DPC 4571), this protein is ATP-dependent 6-phosphofructokinase.